Consider the following 899-residue polypeptide: Tubulin glycylase 3F (899 aa).

Residues 471–835 (FKDVIQIIKN…TEYYQIQNWK (365 aa)) form the TTL domain. ATP-binding positions include 642 to 645 (QKYI), K663, and D665.

The protein resides in the cytoplasm. The protein localises to the cytoskeleton. Its subcellular location is the cilium basal body. In terms of biological role, probable glycylase which modifies tubulin, generating side chains of glycine on the gamma-carboxyl groups of specific glutamate residues within the C-terminal tail of tubulin. The chain is Tubulin glycylase 3F (TTLL3F) from Tetrahymena thermophila (strain SB210).